We begin with the raw amino-acid sequence, 956 residues long: Lon protease homolog, mitochondrial 1 (956 aa).

2 disordered regions span residues 37 to 57 (NNNN…NNNN) and 83 to 123 (KKKG…GNEK). Basic and acidic residues predominate over residues 91–123 (NNDDNDNEKNEKNEKKVKNEKKEKNEKNDGNEK). Residues 159 to 357 (VVIYPSNSVN…MLYHMILNEQ (199 aa)) enclose the Lon N-terminal domain. Position 511–518 (511–518 (GPPGTGKT)) interacts with ATP. One can recognise a Lon proteolytic domain in the interval 747-945 (VTPIGVVNGL…KDVFEVAFPN (199 aa)). Positions 777–795 (KPLSSLPPSQQQQNQLEPS) are enriched in low complexity. Residues 777–800 (KPLSSLPPSQQQQNQLEPSIKTTG) are disordered. Residues Ser-851 and Lys-894 contribute to the active site.

Belongs to the peptidase S16 family. Homohexamer or homoheptamer. Organized in a ring with a central cavity.

The protein resides in the mitochondrion matrix. The catalysed reaction is Hydrolysis of proteins in presence of ATP.. In terms of biological role, ATP-dependent serine protease that mediates the selective degradation of misfolded, unassembled or oxidatively damaged polypeptides as well as certain short-lived regulatory proteins in the mitochondrial matrix. May also have a chaperone function in the assembly of inner membrane protein complexes. Participates in the regulation of mitochondrial gene expression and in the maintenance of the integrity of the mitochondrial genome. Binds to mitochondrial DNA in a site-specific manner. The sequence is that of Lon protease homolog, mitochondrial 1 from Dictyostelium discoideum (Social amoeba).